A 422-amino-acid polypeptide reads, in one-letter code: Trichothecene biosynthesis transcription regulator TRI10 (422 aa).

Belongs to the TRI10 transcription regulator family.

The protein resides in the nucleus. Functionally, transcriptional activator of all of the trichothecene biosynthesis genes. Acts upstream of the cluster-encoded transcription factor TRI6 and is necessary for full expression of both the other trichothecene genes and the genes for the primary metabolic pathway that precedes the trichothecene biosynthetic pathway. This Trichoderma arundinaceum protein is Trichothecene biosynthesis transcription regulator TRI10.